The following is a 302-amino-acid chain: Short-chain dehydrogenase/reductase 1 (302 aa).

Residues N20 to L23, R43, D71 to V72, and N98 each bind NADP(+). S170 serves as a coordination point for substrate. NADP(+) is bound by residues Y226, K230, and V257 to N262. Y226 (proton acceptor) is an active-site residue.

Belongs to the short-chain dehydrogenases/reductases (SDR) family. In terms of tissue distribution, mainly expressed in flowers and flower buds, to a lesser extent in leaves and, at low levels, in stems and roots.

Its pathway is secondary metabolite biosynthesis; terpenoid biosynthesis. Functionally, component of the oleanane-type triterpene saponins (e.g. saponarioside A and saponarioside B) biosynthetic pathway, leading to the production of natural products with detergent properties used as traditional sources of soap. A dehydrogenase/reductase that, together with UGT74CD1, mediates the conversion of QA-tri to QA-triF; UGT74CD1 may transfer 4-keto-6-deoxy-glucose to QA-tri, which is in turn reduced to D-fucose by SDR1, thus leading to QA-triF formation via the initiation of the C-28 sugar chain. This chain is Short-chain dehydrogenase/reductase 1, found in Saponaria officinalis (Common soapwort).